The chain runs to 257 residues: Thiazole synthase (257 aa).

The active-site Schiff-base intermediate with DXP is lysine 95. 1-deoxy-D-xylulose 5-phosphate contacts are provided by residues glycine 156, 182 to 183 (AG), and 204 to 205 (NT).

Belongs to the ThiG family. In terms of assembly, homotetramer. Forms heterodimers with either ThiH or ThiS.

It is found in the cytoplasm. The enzyme catalyses [ThiS sulfur-carrier protein]-C-terminal-Gly-aminoethanethioate + 2-iminoacetate + 1-deoxy-D-xylulose 5-phosphate = [ThiS sulfur-carrier protein]-C-terminal Gly-Gly + 2-[(2R,5Z)-2-carboxy-4-methylthiazol-5(2H)-ylidene]ethyl phosphate + 2 H2O + H(+). Its pathway is cofactor biosynthesis; thiamine diphosphate biosynthesis. Functionally, catalyzes the rearrangement of 1-deoxy-D-xylulose 5-phosphate (DXP) to produce the thiazole phosphate moiety of thiamine. Sulfur is provided by the thiocarboxylate moiety of the carrier protein ThiS. In vitro, sulfur can be provided by H(2)S. The sequence is that of Thiazole synthase from Fusobacterium nucleatum subsp. nucleatum (strain ATCC 25586 / DSM 15643 / BCRC 10681 / CIP 101130 / JCM 8532 / KCTC 2640 / LMG 13131 / VPI 4355).